The sequence spans 130 residues: Fluoride-specific ion channel FluC (130 aa).

A run of 4 helical transmembrane segments spans residues 9 to 29, 39 to 59, 71 to 91, and 104 to 124; these read LAII…TIFL, YATF…VTLA, LLLA…ALEV, and VLYG…GSLI. Na(+) is bound by residues glycine 79 and threonine 82.

This sequence belongs to the fluoride channel Fluc/FEX (TC 1.A.43) family.

The protein resides in the cell inner membrane. The catalysed reaction is fluoride(in) = fluoride(out). With respect to regulation, na(+) is not transported, but it plays an essential structural role and its presence is essential for fluoride channel function. Its function is as follows. Fluoride-specific ion channel. Important for reducing fluoride concentration in the cell, thus reducing its toxicity. The protein is Fluoride-specific ion channel FluC of Synechocystis sp. (strain ATCC 27184 / PCC 6803 / Kazusa).